The following is a 239-amino-acid chain: Methylthioribulose-1-phosphate dehydratase (239 aa).

Cys94 is a binding site for substrate. Residues His112 and His114 each contribute to the Zn(2+) site. Glu136 (proton donor/acceptor) is an active-site residue. His192 serves as a coordination point for Zn(2+).

Belongs to the aldolase class II family. MtnB subfamily. Requires Zn(2+) as cofactor.

It is found in the cytoplasm. It catalyses the reaction 5-(methylsulfanyl)-D-ribulose 1-phosphate = 5-methylsulfanyl-2,3-dioxopentyl phosphate + H2O. It participates in amino-acid biosynthesis; L-methionine biosynthesis via salvage pathway; L-methionine from S-methyl-5-thio-alpha-D-ribose 1-phosphate: step 2/6. Catalyzes the dehydration of methylthioribulose-1-phosphate (MTRu-1-P) into 2,3-diketo-5-methylthiopentyl-1-phosphate (DK-MTP-1-P). Functions in the methionine salvage pathway. May play a role in apoptosis. This chain is Methylthioribulose-1-phosphate dehydratase, found in Xenopus tropicalis (Western clawed frog).